The following is a 973-amino-acid chain: Translation initiation factor IF-2 (973 aa).

The tract at residues 52-388 is disordered; it reads PDQEEVKPAA…QAQKPAQPLE (337 aa). Basic and acidic residues-rich tracts occupy residues 83–120, 128–148, 157–172, 186–202, 210–246, 272–288, 314–333, and 343–360; these read ESRKKDAAMLDSQKPDRDRVQKNGRERAGKATRADHYK, VPSRPPDRRFQERPKQSDKAR, QGARLKTADFVQERTR, VQQERVQDRQQKERPPF, PQHEHKPQDSVKERPHPERASREADNAKRAERLDKGA, RAGERGARPGGLHETKP, LLDDRRRQTEEKVKVTEKQK, and KSREKRNAMAELAEERLR. Low complexity predominate over residues 374-386; the sequence is AKPQEQAQKPAQP. In terms of domain architecture, tr-type G spans 472 to 641; that stretch reads DRPCVVTVMG…LLVAEMSELK (170 aa). A G1 region spans residues 481 to 488; sequence GHVDHGKT. 481-488 is a binding site for GTP; sequence GHVDHGKT. The interval 506–510 is G2; that stretch reads GITQH. A G3 region spans residues 527 to 530; it reads DTPG. GTP-binding positions include 527–531 and 581–584; these read DTPGH and NKID. Residues 581–584 are G4; that stretch reads NKID. Positions 617 to 619 are G5; it reads SAL.

This sequence belongs to the TRAFAC class translation factor GTPase superfamily. Classic translation factor GTPase family. IF-2 subfamily.

It is found in the cytoplasm. Functionally, one of the essential components for the initiation of protein synthesis. Protects formylmethionyl-tRNA from spontaneous hydrolysis and promotes its binding to the 30S ribosomal subunits. Also involved in the hydrolysis of GTP during the formation of the 70S ribosomal complex. This chain is Translation initiation factor IF-2, found in Pelotomaculum thermopropionicum (strain DSM 13744 / JCM 10971 / SI).